We begin with the raw amino-acid sequence, 500 residues long: Probable cytosol aminopeptidase (500 aa).

Positions 265 and 270 each coordinate Mn(2+). Residue K277 is part of the active site. Mn(2+) is bound by residues D288, D347, and E349. The active site involves R351.

The protein belongs to the peptidase M17 family. Mn(2+) serves as cofactor.

The protein resides in the cytoplasm. It catalyses the reaction Release of an N-terminal amino acid, Xaa-|-Yaa-, in which Xaa is preferably Leu, but may be other amino acids including Pro although not Arg or Lys, and Yaa may be Pro. Amino acid amides and methyl esters are also readily hydrolyzed, but rates on arylamides are exceedingly low.. The catalysed reaction is Release of an N-terminal amino acid, preferentially leucine, but not glutamic or aspartic acids.. Functionally, presumably involved in the processing and regular turnover of intracellular proteins. Catalyzes the removal of unsubstituted N-terminal amino acids from various peptides. The protein is Probable cytosol aminopeptidase of Rickettsia massiliae (strain Mtu5).